Here is a 301-residue protein sequence, read N- to C-terminus: DNA repair protein RecO (301 aa).

A disordered region spans residues 272 to 301 (PTPSGQGSPVAAAAFSEEDSETLGSNLKKL).

This sequence belongs to the RecO family.

Involved in DNA repair and RecF pathway recombination. In Synechococcus sp. (strain JA-3-3Ab) (Cyanobacteria bacterium Yellowstone A-Prime), this protein is DNA repair protein RecO.